A 467-amino-acid chain; its full sequence is Membrane-bound acylglycerophosphatidylinositol O-acyltransferase mboat7 (467 aa).

Over 1–5 the chain is Cytoplasmic; that stretch reads MSPDE. The helical transmembrane segment at 6-22 threads the bilayer; the sequence is LVYLGILAATIPVGFLF. Residues 23 to 33 are Lumenal-facing; the sequence is RYLSPPVKQGA. Residues 34 to 57 form a helical membrane-spanning segment; that stretch reads ALLLGLIISIATCGIHTLHSLCTV. Residues 58–73 are Cytoplasmic-facing; the sequence is LGTWIIIKINWRSAPA. A helical transmembrane segment spans residues 74–93; the sequence is LSLAWTFLYLLFFRLVTWFG. Topologically, residues 94-193 are lumenal; that stretch reads LPQPTPFANA…LPGKEPCLQR (100 aa). The helical transmembrane segment at 194–211 threads the bilayer; that stretch reads LKMVPVYGLLFIAVNSVF. The Cytoplasmic portion of the chain corresponds to 212–230; sequence PLSYVRTEDFLEHNYFYRF. The chain crosses the membrane as a helical span at residues 231 to 260; the sequence is FYMVAIFFVFRMRFYSAWCGAEAGCISAGL. The Lumenal segment spans residues 261–421; sequence GCYPQGALSK…LKASDTISYW (161 aa). An N-linked (GlcNAc...) asparagine glycan is attached at Asn-316. Residues 422–442 form a helical membrane-spanning segment; it reads SSIYFVIHIIAIVCIAVGQFM. Topologically, residues 443-467 are cytoplasmic; it reads KGGRKREKRERGEGEKEDAVREKAE. The tract at residues 447-467 is disordered; it reads KREKRERGEGEKEDAVREKAE. Over residues 451 to 467 the composition is skewed to basic and acidic residues; the sequence is RERGEGEKEDAVREKAE.

It belongs to the membrane-bound acyltransferase family.

It is found in the endoplasmic reticulum membrane. It catalyses the reaction a 1-acyl-sn-glycero-3-phospho-(1D-myo-inositol) + (5Z,8Z,11Z,14Z)-eicosatetraenoyl-CoA = a 1-acyl-2-(5Z,8Z,11Z,14Z-eicosatetraenoyl)-sn-glycero-3-phospho-(1D-myo-inositol) + CoA. The enzyme catalyses (5Z,8Z,11Z,14Z)-eicosatetraenoyl-CoA + 1-hexadecanoyl-sn-glycero-3-phosphocholine = 1-hexadecanoyl-2-(5Z,8Z,11Z,14Z-eicosatetraenoyl)-sn-glycero-3-phosphocholine + CoA. The catalysed reaction is a 1-acyl-sn-glycero-3-phospho-(1D-myo-inositol) + an acyl-CoA = a 1,2-diacyl-sn-glycero-3-phospho-(1D-myo-inositol) + CoA. It carries out the reaction 1-octadecanoyl-sn-glycero-3-phospho-(1D-myo-inositol) + (5Z,8Z,11Z,14Z)-eicosatetraenoyl-CoA = 1-octadecanoyl-2-(5Z,8Z,11Z,14Z-eicosatetraenoyl)-sn-glycero-3-phospho-(1D-myo-inositol) + CoA. The protein operates within lipid metabolism; phospholipid metabolism. Its function is as follows. Acyltransferase which catalyzes the transfer of an acyl group from an acyl-CoA to a lysophosphatidylinositol (1-acylglycerophosphatidylinositol or LPI) leading to the production of a phosphatidylinositol (1,2-diacyl-sn-glycero-3-phosphoinositol or PI) and participates in the reacylation step of the phospholipid remodeling pathway also known as the Lands cycle. Prefers arachidonoyl-CoA as the acyl donor, thus contributing to the regulation of free levels arachidonic acid in cell. This is Membrane-bound acylglycerophosphatidylinositol O-acyltransferase mboat7 (mboat7) from Danio rerio (Zebrafish).